Here is a 380-residue protein sequence, read N- to C-terminus: Cytochrome b (380 aa).

Transmembrane regions (helical) follow at residues 34-54 (SGSL…FLAM), 78-99 (WFLR…YCHI), 114-134 (WNVG…GYVL), and 179-199 (FFPF…IHLV). Residues H84 and H98 each contribute to the heme b site. Heme b is bound by residues H183 and H197. A ubiquinone is bound at residue H202. 4 consecutive transmembrane segments (helical) span residues 227–247 (TKDT…ALLF), 289–309 (LGGV…PLLN), 321–341 (LSQA…WIGS), and 348–369 (YVLL…GFPI).

This sequence belongs to the cytochrome b family. As to quaternary structure, the main subunits of complex b-c1 are: cytochrome b, cytochrome c1 and the Rieske protein. Heme b is required as a cofactor.

Its subcellular location is the mitochondrion inner membrane. Its function is as follows. Component of the ubiquinol-cytochrome c reductase complex (complex III or cytochrome b-c1 complex) that is part of the mitochondrial respiratory chain. The b-c1 complex mediates electron transfer from ubiquinol to cytochrome c. Contributes to the generation of a proton gradient across the mitochondrial membrane that is then used for ATP synthesis. The chain is Cytochrome b (MT-CYB) from Strongylocentrotus purpuratus (Purple sea urchin).